The sequence spans 391 residues: Pectin acetylesterase 11 (391 aa).

Residues M1–A23 form the signal peptide. Active-site charge relay system residues include S171, D267, and H334.

It belongs to the pectinacetylesterase family.

The protein localises to the secreted. It is found in the cell wall. In terms of biological role, hydrolyzes acetyl esters in homogalacturonan regions of pectin. In type I primary cell wall, galacturonic acid residues of pectin can be acetylated at the O-2 and O-3 positions. Decreasing the degree of acetylation of pectin gels in vitro alters their physical properties. This is Pectin acetylesterase 11 from Arabidopsis thaliana (Mouse-ear cress).